We begin with the raw amino-acid sequence, 155 residues long: D-aminoacyl-tRNA deacylase (155 aa).

A Gly-cisPro motif, important for rejection of L-amino acids motif is present at residues 147–148; sequence GP.

This sequence belongs to the DTD family. In terms of assembly, homodimer.

It localises to the cytoplasm. It catalyses the reaction glycyl-tRNA(Ala) + H2O = tRNA(Ala) + glycine + H(+). The enzyme catalyses a D-aminoacyl-tRNA + H2O = a tRNA + a D-alpha-amino acid + H(+). An aminoacyl-tRNA editing enzyme that deacylates mischarged D-aminoacyl-tRNAs. Also deacylates mischarged glycyl-tRNA(Ala), protecting cells against glycine mischarging by AlaRS. Acts via tRNA-based rather than protein-based catalysis; rejects L-amino acids rather than detecting D-amino acids in the active site. By recycling D-aminoacyl-tRNA to D-amino acids and free tRNA molecules, this enzyme counteracts the toxicity associated with the formation of D-aminoacyl-tRNA entities in vivo and helps enforce protein L-homochirality. The polypeptide is D-aminoacyl-tRNA deacylase (Corynebacterium urealyticum (strain ATCC 43042 / DSM 7109)).